Reading from the N-terminus, the 901-residue chain is Aconitate hydratase A (901 aa).

Positions 443, 509, and 512 each coordinate [4Fe-4S] cluster.

The protein belongs to the aconitase/IPM isomerase family. As to quaternary structure, monomer. Requires [4Fe-4S] cluster as cofactor.

The enzyme catalyses citrate = D-threo-isocitrate. The catalysed reaction is (2S,3R)-3-hydroxybutane-1,2,3-tricarboxylate = 2-methyl-cis-aconitate + H2O. Its pathway is carbohydrate metabolism; tricarboxylic acid cycle; isocitrate from oxaloacetate: step 2/2. The protein operates within organic acid metabolism; propanoate degradation. In terms of biological role, involved in the catabolism of short chain fatty acids (SCFA) via the tricarboxylic acid (TCA)(acetyl degradation route) and probably the 2-methylcitrate cycle I (propionate degradation route). Catalyzes the reversible isomerization of citrate to isocitrate via cis-aconitate. Could catalyze the hydration of 2-methyl-cis-aconitate to yield (2R,3S)-2-methylisocitrate. The apo form of AcnA functions as a RNA-binding regulatory protein. The polypeptide is Aconitate hydratase A (acnA) (Staphylococcus aureus (strain MRSA252)).